The following is a 157-amino-acid chain: Mitochondrial inner membrane protease subunit 1 (157 aa).

Catalysis depends on residues Ser35 and Lys80.

This sequence belongs to the peptidase S26 family. IMP1 subfamily. In terms of assembly, heterodimer of 2 subunits, imp1 and imp2.

The protein resides in the mitochondrion inner membrane. In terms of biological role, catalyzes the removal of transit peptides required for the targeting of proteins from the mitochondrial matrix, across the inner membrane, into the inter-membrane space. The sequence is that of Mitochondrial inner membrane protease subunit 1 (imp1) from Schizosaccharomyces pombe (strain 972 / ATCC 24843) (Fission yeast).